A 313-amino-acid polypeptide reads, in one-letter code: Recombination-promoting nuclease pSLT051 (313 aa).

It belongs to the Rpn/YhgA-like nuclease family.

A low activity DNA endonuclease probably yielding 3'-hydroxyl ends. Involved in RecA-independent recombination and horizontal gene transfer. The chain is Recombination-promoting nuclease pSLT051 from Salmonella typhimurium (strain LT2 / SGSC1412 / ATCC 700720).